Reading from the N-terminus, the 158-residue chain is Large ribosomal subunit protein uL16 (158 aa).

This sequence belongs to the universal ribosomal protein uL16 family. As to quaternary structure, part of the 50S ribosomal subunit.

In terms of biological role, binds 23S rRNA and is also seen to make contacts with the A and possibly P site tRNAs. The polypeptide is Large ribosomal subunit protein uL16 (Prochlorococcus marinus (strain MIT 9313)).